The following is a 524-amino-acid chain: Chromosomal replication initiator protein DnaA (524 aa).

Residues 1 to 85 (MSQNSSSLLE…TRVLSLRMGR (85 aa)) form a domain I, interacts with DnaA modulators region. Residues 85–182 (RSFSLAVSVE…TPAHNPNREV (98 aa)) are domain II. The disordered stretch occupies residues 95–183 (PEQEIPETPA…PAHNPNREVS (89 aa)). Residues 148-158 (APEPHPAPIAD) are compositionally biased toward pro residues. The tract at residues 183-399 (SLNPKYTFES…GALIRVSAYS (217 aa)) is domain III, AAA+ region. The ATP site is built by Gly227, Gly229, Lys230, and Thr231. A domain IV, binds dsDNA region spans residues 400–524 (SLINQPIDKE…TQLIKSRGRN (125 aa)).

It belongs to the DnaA family. Oligomerizes as a right-handed, spiral filament on DNA at oriC.

Its subcellular location is the cytoplasm. Functionally, plays an essential role in the initiation and regulation of chromosomal replication. ATP-DnaA binds to the origin of replication (oriC) to initiate formation of the DNA replication initiation complex once per cell cycle. Binds the DnaA box (a 9 base pair repeat at the origin) and separates the double-stranded (ds)DNA. Forms a right-handed helical filament on oriC DNA; dsDNA binds to the exterior of the filament while single-stranded (ss)DNA is stabiized in the filament's interior. The ATP-DnaA-oriC complex binds and stabilizes one strand of the AT-rich DNA unwinding element (DUE), permitting loading of DNA polymerase. After initiation quickly degrades to an ADP-DnaA complex that is not apt for DNA replication. Binds acidic phospholipids. This chain is Chromosomal replication initiator protein DnaA, found in Corynebacterium glutamicum (strain ATCC 13032 / DSM 20300 / JCM 1318 / BCRC 11384 / CCUG 27702 / LMG 3730 / NBRC 12168 / NCIMB 10025 / NRRL B-2784 / 534).